A 387-amino-acid polypeptide reads, in one-letter code: 3-ketoacyl-CoA thiolase (387 aa).

Catalysis depends on cysteine 91, which acts as the Acyl-thioester intermediate. Catalysis depends on proton acceptor residues histidine 343 and cysteine 373.

It belongs to the thiolase-like superfamily. Thiolase family. In terms of assembly, heterotetramer of two alpha chains (FadB) and two beta chains (FadA).

The protein localises to the cytoplasm. It carries out the reaction an acyl-CoA + acetyl-CoA = a 3-oxoacyl-CoA + CoA. The protein operates within lipid metabolism; fatty acid beta-oxidation. Its function is as follows. Catalyzes the final step of fatty acid oxidation in which acetyl-CoA is released and the CoA ester of a fatty acid two carbons shorter is formed. The protein is 3-ketoacyl-CoA thiolase of Escherichia coli O139:H28 (strain E24377A / ETEC).